A 164-amino-acid polypeptide reads, in one-letter code: V-type proton ATPase 16 kDa proteolipid subunit (164 aa).

At 1 to 9 (MASFSGDET) the chain is on the lumenal side. Residues 10–32 (APFFGFLGAAAALVFSCMGAAYG) traverse the membrane as a helical segment. Residues 33 to 54 (TAKSGVGVASMGVMRPELVMKS) lie on the Cytoplasmic side of the membrane. A helical membrane pass occupies residues 55–75 (IVPVVMAGVLGIYGLIIAVII). Residues 76–94 (STGINPKAKSYYLFDGYAH) are Lumenal-facing. The chain crosses the membrane as a helical span at residues 95–116 (LSSGLACGLAGLSAGMAIGIVG). Residues 117 to 128 (DAGVRANAQQPK) are Cytoplasmic-facing. A helical transmembrane segment spans residues 129-154 (LFVGMILILIFAEALALYGLIVGIIL). Residues 155 to 164 (SSRAGQSRAD) lie on the Lumenal side of the membrane.

The protein belongs to the V-ATPase proteolipid subunit family. As to quaternary structure, V-ATPase is a heteromultimeric enzyme composed of a peripheral catalytic V1 complex (main components: subunits A, B, C, D, E, and F) attached to an integral membrane V0 proton pore complex (main component: the proteolipid protein; which is present as a hexamer that forms the proton-conducting pore).

It localises to the vacuole membrane. In terms of biological role, proton-conducting pore forming subunit of the membrane integral V0 complex of vacuolar ATPase. V-ATPase is responsible for acidifying a variety of intracellular compartments in eukaryotic cells. This Vigna radiata var. radiata (Mung bean) protein is V-type proton ATPase 16 kDa proteolipid subunit.